Consider the following 164-residue polypeptide: Dehydrin Rab16C (164 aa).

A compositionally biased stretch (gly residues) spans 42 to 51 (MGGHHAGAGG). Residues 42-164 (MGGHHAGAGG…KIKEKLPGQH (123 aa)) are disordered. Low complexity predominate over residues 105 to 115 (GNNQQQQQMMG). The segment covering 128–138 (GMTGAGTGTGV) has biased composition (gly residues). Basic and acidic residues predominate over residues 147–164 (GEKKGFMDKIKEKLPGQH).

It belongs to the plant dehydrin family.

The sequence is that of Dehydrin Rab16C (RAB16C) from Oryza sativa subsp. japonica (Rice).